The sequence spans 878 residues: Alanine--tRNA ligase (878 aa).

Residues His567, His571, Cys669, and His673 each coordinate Zn(2+).

It belongs to the class-II aminoacyl-tRNA synthetase family. Zn(2+) is required as a cofactor.

The protein resides in the cytoplasm. It catalyses the reaction tRNA(Ala) + L-alanine + ATP = L-alanyl-tRNA(Ala) + AMP + diphosphate. Catalyzes the attachment of alanine to tRNA(Ala) in a two-step reaction: alanine is first activated by ATP to form Ala-AMP and then transferred to the acceptor end of tRNA(Ala). Also edits incorrectly charged Ser-tRNA(Ala) and Gly-tRNA(Ala) via its editing domain. This is Alanine--tRNA ligase from Rickettsia canadensis (strain McKiel).